The following is a 274-amino-acid chain: TATA box-binding protein-associated factor RNA polymerase I subunit D (274 aa).

Residues 1 to 19 (MDSLNYTTACDSAVETENQ) show a composition bias toward polar residues. Disordered regions lie at residues 1–45 (MDSL…RQRN) and 84–111 (NKKR…RTTR). The residue at position 20 (Ser-20) is a Phosphoserine. Positions 84–110 (NKKRKRKKKKYKPTGRSVGRPKGRRTT) are enriched in basic residues. 2 positions are modified to phosphoserine: Ser-132 and Ser-229.

As to quaternary structure, component of the transcription factor SL1/TIF-IB complex, composed of TBP and at least TAF1A, TAF1B, TAF1C and TAF1D. Interacts with UBTF.

It is found in the nucleus. In terms of biological role, component of the transcription factor SL1/TIF-IB complex, which is involved in the assembly of the PIC (preinitiation complex) during RNA polymerase I-dependent transcription. The rate of PIC formation probably is primarily dependent on the rate of association of SL1/TIF-IB with the rDNA promoter. SL1/TIF-IB is involved in stabilization of nucleolar transcription factor 1/UBTF on rDNA. Formation of SL1/TIF-IB excludes the association of TBP with TFIID subunits. This is TATA box-binding protein-associated factor RNA polymerase I subunit D (TAF1D) from Bos taurus (Bovine).